A 1029-amino-acid polypeptide reads, in one-letter code: Tyrosine-protein kinase-like otk (1029 aa).

A signal peptide spans 1 to 18 (MISIYGLVMALMMASVLA). The Extracellular portion of the chain corresponds to 19-577 (SSSRFQRVPQ…GGDGFLVTRA (559 aa)). Ig-like C2-type domains are found at residues 21 to 110 (SRFQ…AKLS), 109 to 195 (LSVI…RVMS), 247 to 361 (PEDL…APIS), 364 to 459 (PGIL…VAIN), and 464 to 554 (PKFS…VQLV). N-linked (GlcNAc...) asparagine glycosylation occurs at Asn35. Disulfide bonds link Cys42–Cys91, Cys133–Cys184, Cys272–Cys350, and Cys395–Cys443. Residues Asn332, Asn413, Asn425, Asn440, Asn453, Asn508, and Asn520 are each glycosylated (N-linked (GlcNAc...) asparagine). Residues Cys486 and Cys538 are joined by a disulfide bond. A helical membrane pass occupies residues 578–598 (VLITMTVALAYIVLVVGLMLW). At 599-1029 (CRYRRQARKA…LSKAMQSAEK (431 aa)) the chain is on the cytoplasmic side. 2 disordered regions span residues 613–675 (LSTK…KKSA) and 714–756 (SPSD…KTSM). Residues 651–669 (KSSGDAQKSDDTACSQQSR) show a composition bias toward polar residues. Ser674 bears the Phosphoserine mark. Residues 688–1024 (LSELIQIGRG…QLGAALSKAM (337 aa)) form the Protein kinase; inactive domain. Residues 716-727 (SDKDADTEKQHS) show a composition bias toward basic and acidic residues.

Belongs to the protein kinase superfamily. Tyr protein kinase family. Insulin receptor subfamily. In terms of assembly, interacts with plexA; component of a receptor complex that mediates the repulsive signaling in response to Semaphorin ligands.

It is found in the cell membrane. Acts as a calcium-dependent, homophilic cell adhesion molecule that regulates neural recognition during the development of the nervous system. Component of the repulsive Plexin signaling response to regulate motor axon guidance at the embryonic stage. Also component of a receptor complex that is required in the adult visual system to innervate the lamina layer; specific targeting of R1-R6 axons. The polypeptide is Tyrosine-protein kinase-like otk (Drosophila simulans (Fruit fly)).